The sequence spans 537 residues: Pancreatic secretory granule membrane major glycoprotein GP2 (537 aa).

The N-terminal stretch at 1 to 28 (MPHLMERMVGSGLLWLALVSCILTQASA) is a signal peptide. A beta hairpin region spans residues 41–60 (SYGLDLDCGAPGTPEAHVCF). Cystine bridges form between C48–C59, C63–C157, C85–C172, C107–C145, C113–C177, C138–C146, C190–C200, C194–C209, C211–C241, C229–C320, and C261–C284. The D10C stretch occupies residues 61-81 (DPCQNYTLLDEPFRSTENSAG). N-linked (GlcNAc...) (high mannose) asparagine glycosylation is present at N65. Residues N88, N122, and N134 are each glycosylated (N-linked (GlcNAc...) asparagine). Residues 186–230 (VEDKCEKACRPEEECLALNSTWGCFCRQDLNSSDVHSLQPQLDCG) enclose the EGF-like domain. 3 N-linked (GlcNAc...) asparagine glycosylation sites follow: N204, N216, and N260. The tract at residues 228–321 (DCGPREIKVK…TILNINFQCA (94 aa)) is ZP-N. The 257-residue stretch at 228-484 (DCGPREIKVK…PSCSRSQVRS (257 aa)) folds into the ZP domain. N291 and N342 each carry an N-linked (GlcNAc...) asparagine glycan. Residues 322 to 345 (YPLDMKVSLQAALQPIVSSLNVSV) form a flexible ZP-N/ZP-C linker region. Positions 346–357 (DGNGEFIVRMAL) are internal hydrophobic patch (IHP). Residues 346–484 (DGNGEFIVRM…PSCSRSQVRS (139 aa)) are ZP-C. Residue N362 is glycosylated (N-linked (GlcNAc...) asparagine). 3 cysteine pairs are disulfide-bonded: C401–C461, C422–C477, and C466–C473. The external hydrophobic patch (EHP) stretch occupies residues 491–499 (LARVLDLGP). A lipid anchor (GPI-anchor amidated asparagine) is attached at N512. A propeptide spans 513-537 (GTPSTAGFLVAWPMVLLTVLLAWLF) (removed in mature form).

As to quaternary structure, interacts with SYCN. Interacts with bacterial adhesin fimH. In terms of processing, N-glycosylated. Glycosylated Asn-65 may be required for interaction with bacterial adhesin fimH. Expressed in pancreas (at protein level). Specifically expressed by M (microfold) cells which are atypical epithelial cells of the intestine (at protein level).

It localises to the zymogen granule membrane. The protein resides in the secreted. Its subcellular location is the cell membrane. It is found in the apical cell membrane. The protein localises to the membrane raft. It localises to the endosome. Functionally, functions as an intestinal M-cell transcytotic receptor specific for type-I-piliated bacteria that participates in the mucosal immune response toward these bacteria. At the apical membrane of M-cells it binds fimH, a protein of the bacteria type I pilus tip. Internalizes bound bacteria, like E.coli and S.typhimurium, from the lumen of the intestine and delivers them, through M-cells, to the underlying organized lymphoid follicles where they are captured by antigen-presenting dendritic cells to elicit a mucosal immune response. This is Pancreatic secretory granule membrane major glycoprotein GP2 from Homo sapiens (Human).